A 492-amino-acid polypeptide reads, in one-letter code: Probable cytochrome P450 313a1 (492 aa).

Cys-438 lines the heme pocket.

Belongs to the cytochrome P450 family. It depends on heme as a cofactor.

Its subcellular location is the endoplasmic reticulum membrane. It localises to the microsome membrane. Its function is as follows. May be involved in the metabolism of insect hormones and in the breakdown of synthetic insecticides. The sequence is that of Probable cytochrome P450 313a1 (Cyp313a1) from Drosophila melanogaster (Fruit fly).